A 550-amino-acid polypeptide reads, in one-letter code: Hydroxylamine reductase (550 aa).

Cysteine 3, cysteine 6, cysteine 18, and cysteine 25 together coordinate [2Fe-2S] cluster. Hybrid [4Fe-2O-2S] cluster is bound by residues histidine 249, glutamate 273, cysteine 317, cysteine 405, cysteine 433, cysteine 458, glutamate 492, and lysine 494. A Cysteine persulfide modification is found at cysteine 405.

The protein belongs to the HCP family. [2Fe-2S] cluster serves as cofactor. Hybrid [4Fe-2O-2S] cluster is required as a cofactor.

The protein localises to the cytoplasm. The catalysed reaction is A + NH4(+) + H2O = hydroxylamine + AH2 + H(+). Its function is as follows. Catalyzes the reduction of hydroxylamine to form NH(3) and H(2)O. The protein is Hydroxylamine reductase of Pectobacterium carotovorum subsp. carotovorum (strain PC1).